Reading from the N-terminus, the 194-residue chain is Histone H1.0 (194 aa).

Met1 is subject to N-acetylmethionine. The segment covering 1-11 has biased composition (low complexity); the sequence is MTENSTSAPAA. The disordered stretch occupies residues 1–29; that stretch reads MTENSTSAPAAKPKRAKASKKSTDHPKYS. N-acetylthreonine; partial; in Histone H1.0, N-terminally processed is present on Thr2. Asn4 carries the deamidated asparagine; partial modification. The H15 domain maps to 24 to 97; the sequence is DHPKYSDMIV…GASGSFRLAK (74 aa). Arg42 carries the post-translational modification Citrulline. The segment at 84–194 is disordered; that stretch reads TKGVGASGSF…SSAKRAGKKK (111 aa). Ser104 carries the post-translational modification ADP-ribosylserine. Residues 105 to 194 are compositionally biased toward basic residues; the sequence is VAFKKTKKEI…SSAKRAGKKK (90 aa).

It belongs to the histone H1/H5 family. In terms of processing, phosphorylated on Ser-17 in RNA edited version. Post-translationally, ADP-ribosylated on Ser-104 in response to DNA damage.

It is found in the nucleus. Its subcellular location is the chromosome. In terms of biological role, histones H1 are necessary for the condensation of nucleosome chains into higher-order structures. The histones H1.0 are found in cells that are in terminal stages of differentiation or that have low rates of cell division. This is Histone H1.0 from Homo sapiens (Human).